A 465-amino-acid polypeptide reads, in one-letter code: Serine/threonine-protein kinase AtPK1/AtPK6 (465 aa).

An LVxCxE motif motif is present at residues 91–96 (LVECLE). The Protein kinase domain maps to 134-389 (FEVMKVVGKG…AEEIKQHKWF (256 aa)). ATP is bound by residues 140 to 148 (VGKGAFGKV) and lysine 163. Residue aspartate 257 is the Proton acceptor of the active site. Residues 275–301 (DFGLAKEFEENTRSNSMCGTTEYMAPE) form an activation loop region. Residue serine 290 is modified to Phosphoserine; by PDPK1. The AGC-kinase C-terminal domain maps to 390 to 460 (KGINWKKLEA…VRPPPSFLHQ (71 aa)). Phosphothreonine; by TOR is present on threonine 449.

It belongs to the protein kinase superfamily. AGC Ser/Thr protein kinase family. S6 kinase subfamily. As to quaternary structure, interacts with RAPTOR1. Interacts with RBR1-E2FB complex through its LVxCxE motif. Interacts with TAP46. Binds to MRF1. In terms of processing, undergoes serine-specific autophosphorylation. Phosphorylated at Thr-449 by TOR. In terms of tissue distribution, expressed in all tissues.

It is found in the cytoplasm. The protein localises to the nucleus. It carries out the reaction L-seryl-[protein] + ATP = O-phospho-L-seryl-[protein] + ADP + H(+). The enzyme catalyses L-threonyl-[protein] + ATP = O-phospho-L-threonyl-[protein] + ADP + H(+). Its activity is regulated as follows. Activated by PDK1. Repressed during osmotic stress. In terms of biological role, downstream effector of TOR signaling pathway involved in osmotic stress response. Could be involved in the control of plant growth and development. Phosphorylates the ribosomal proteins P14, P16 and S6. Functions as a repressor of cell proliferation and required for maintenance of chromosome stability and ploidy levels through the RBR1-E2F pathway. Mediates the phosphorylation of MRFs (e.g. MRF1). This is Serine/threonine-protein kinase AtPK1/AtPK6 from Arabidopsis thaliana (Mouse-ear cress).